Consider the following 886-residue polypeptide: DNA mismatch repair protein MutS (886 aa).

ATP is bound at residue 641 to 648 (GPNMAGKS).

It belongs to the DNA mismatch repair MutS family.

Its function is as follows. This protein is involved in the repair of mismatches in DNA. It is possible that it carries out the mismatch recognition step. This protein has a weak ATPase activity. The polypeptide is DNA mismatch repair protein MutS (Rickettsia akari (strain Hartford)).